A 311-amino-acid polypeptide reads, in one-letter code: Aspartate carbamoyltransferase catalytic subunit (311 aa).

2 residues coordinate carbamoyl phosphate: Arg55 and Thr56. Lys85 contacts L-aspartate. 3 residues coordinate carbamoyl phosphate: Arg106, His135, and Gln138. Residues Arg168 and Arg230 each coordinate L-aspartate. Residues Leu268 and Pro269 each contribute to the carbamoyl phosphate site.

The protein belongs to the aspartate/ornithine carbamoyltransferase superfamily. ATCase family. As to quaternary structure, heterododecamer (2C3:3R2) of six catalytic PyrB chains organized as two trimers (C3), and six regulatory PyrI chains organized as three dimers (R2).

The enzyme catalyses carbamoyl phosphate + L-aspartate = N-carbamoyl-L-aspartate + phosphate + H(+). Its pathway is pyrimidine metabolism; UMP biosynthesis via de novo pathway; (S)-dihydroorotate from bicarbonate: step 2/3. Catalyzes the condensation of carbamoyl phosphate and aspartate to form carbamoyl aspartate and inorganic phosphate, the committed step in the de novo pyrimidine nucleotide biosynthesis pathway. This chain is Aspartate carbamoyltransferase catalytic subunit, found in Baumannia cicadellinicola subsp. Homalodisca coagulata.